A 452-amino-acid chain; its full sequence is Pup--protein ligase (452 aa).

Residue E9 participates in Mg(2+) binding. An ATP-binding site is contributed by R53. Y55 contacts Mg(2+). Residue D57 is the Proton acceptor of the active site. E63 is a Mg(2+) binding site. The ATP site is built by T66 and W419.

The protein belongs to the Pup ligase/Pup deamidase family. Pup-conjugating enzyme subfamily.

The enzyme catalyses ATP + [prokaryotic ubiquitin-like protein]-L-glutamate + [protein]-L-lysine = ADP + phosphate + N(6)-([prokaryotic ubiquitin-like protein]-gamma-L-glutamyl)-[protein]-L-lysine.. It functions in the pathway protein degradation; proteasomal Pup-dependent pathway. The protein operates within protein modification; protein pupylation. In terms of biological role, catalyzes the covalent attachment of the prokaryotic ubiquitin-like protein modifier Pup to the proteasomal substrate proteins, thereby targeting them for proteasomal degradation. This tagging system is termed pupylation. The ligation reaction involves the side-chain carboxylate of the C-terminal glutamate of Pup and the side-chain amino group of a substrate lysine. This is Pup--protein ligase from Rhodococcus jostii (strain RHA1).